A 326-amino-acid polypeptide reads, in one-letter code: Flap endonuclease 1 (326 aa).

The segment at 1–98 (MGVQFNDSIP…KTREERRKVK (98 aa)) is N-domain. Mg(2+) is bound by residues Asp27, Asp80, Glu152, Glu154, Asp173, Asp175, and Asp224. The interval 116–245 (DMQKYAKRIN…KKALTIIKNK (130 aa)) is I-domain. The interaction with PCNA stretch occupies residues 318–326 (SQTSLDSWF).

It belongs to the XPG/RAD2 endonuclease family. FEN1 subfamily. As to quaternary structure, interacts with PCNA. PCNA stimulates the nuclease activity without altering cleavage specificity. It depends on Mg(2+) as a cofactor.

Structure-specific nuclease with 5'-flap endonuclease and 5'-3' exonuclease activities involved in DNA replication and repair. During DNA replication, cleaves the 5'-overhanging flap structure that is generated by displacement synthesis when DNA polymerase encounters the 5'-end of a downstream Okazaki fragment. Binds the unpaired 3'-DNA end and kinks the DNA to facilitate 5' cleavage specificity. Cleaves one nucleotide into the double-stranded DNA from the junction in flap DNA, leaving a nick for ligation. Also involved in the base excision repair (BER) pathway. Acts as a genome stabilization factor that prevents flaps from equilibrating into structures that lead to duplications and deletions. Also possesses 5'-3' exonuclease activity on nicked or gapped double-stranded DNA. The polypeptide is Flap endonuclease 1 (Methanococcus aeolicus (strain ATCC BAA-1280 / DSM 17508 / OCM 812 / Nankai-3)).